The following is a 188-amino-acid chain: Inosine triphosphate pyrophosphatase (188 aa).

12 to 17 is a binding site for ITP; sequence TGNANK. Glu40 contacts Mg(2+). Residues Lys52, 68–69, Lys85, 144–147, Lys165, and 170–171 each bind ITP; these read DT, FGWD, and HR.

The protein belongs to the HAM1 NTPase family. Homodimer. Requires Mg(2+) as cofactor. Mn(2+) serves as cofactor.

The protein resides in the cytoplasm. It localises to the nucleus. The enzyme catalyses ITP + H2O = IMP + diphosphate + H(+). It catalyses the reaction dITP + H2O = dIMP + diphosphate + H(+). It carries out the reaction XTP + H2O = XMP + diphosphate + H(+). Its function is as follows. Pyrophosphatase that hydrolyzes non-canonical purine nucleotides such as inosine triphosphate (ITP), deoxyinosine triphosphate (dITP) or xanthosine 5'-triphosphate (XTP) to their respective monophosphate derivatives. The enzyme does not distinguish between the deoxy- and ribose forms. Probably excludes non-canonical purines from RNA and DNA precursor pools, thus preventing their incorporation into RNA and DNA and avoiding chromosomal lesions. This is Inosine triphosphate pyrophosphatase from Podospora anserina (strain S / ATCC MYA-4624 / DSM 980 / FGSC 10383) (Pleurage anserina).